We begin with the raw amino-acid sequence, 184 residues long: GTPase RhebL1 (184 aa).

Residues 16-21, 32-38, Gly-63, 119-122, and 149-150 contribute to the GTP site; these read SVGKTS, LEGYDPT, NKAD, and SA. The Effector region motif lies at 35-43; the sequence is YDPTVENTY. Thr-38 is a binding site for Mg(2+). Cys-181 carries the post-translational modification Cysteine methyl ester. The S-farnesyl cysteine moiety is linked to residue Cys-181. Residues 182–184 constitute a propeptide, removed in mature form; it reads YLM.

It belongs to the small GTPase superfamily. Rheb family. As to quaternary structure, interacts with MTOR.

The protein resides in the endomembrane system. It is found in the cytoplasm. The enzyme catalyses GTP + H2O = GDP + phosphate + H(+). Its function is as follows. Binds GTP and exhibits intrinsic GTPase activity. May activate NF-kappa-B-mediated gene transcription. Promotes signal transduction through MTOR, activates RPS6KB1, and is a downstream target of the small GTPase-activating proteins TSC1 and TSC2. This Mus musculus (Mouse) protein is GTPase RhebL1 (Rhebl1).